The chain runs to 257 residues: Pyrroline-5-carboxylate reductase (257 aa).

It belongs to the pyrroline-5-carboxylate reductase family.

The protein resides in the cytoplasm. The enzyme catalyses L-proline + NADP(+) = (S)-1-pyrroline-5-carboxylate + NADPH + 2 H(+). The catalysed reaction is L-proline + NAD(+) = (S)-1-pyrroline-5-carboxylate + NADH + 2 H(+). It participates in amino-acid biosynthesis; L-proline biosynthesis; L-proline from L-glutamate 5-semialdehyde: step 1/1. Functionally, catalyzes the reduction of 1-pyrroline-5-carboxylate (PCA) to L-proline. The chain is Pyrroline-5-carboxylate reductase from Helicobacter pylori (strain ATCC 700392 / 26695) (Campylobacter pylori).